Consider the following 134-residue polypeptide: Protein NrdI (134 aa).

Belongs to the NrdI family.

In terms of biological role, probably involved in ribonucleotide reductase function. The sequence is that of Protein NrdI from Yersinia pseudotuberculosis serotype O:1b (strain IP 31758).